We begin with the raw amino-acid sequence, 1648 residues long: Putative 1-phosphatidylinositol-3-phosphate 5-kinase FAB1C (1648 aa).

Basic and acidic residues predominate over residues tyrosine 97–proline 106. Disordered stretches follow at residues tyrosine 97–serine 116, glutamine 241–alanine 276, serine 721–leucine 746, and lysine 1083–leucine 1139. Over residues threonine 1084 to glutamate 1130 the composition is skewed to basic and acidic residues. Residues asparagine 1316–phenylalanine 1639 form the PIPK domain.

Component of the PI(3,5)P2 regulatory complex at least composed of ATG18, SAC/FIG4, FAB1 and VAC14. Mg(2+) serves as cofactor. It depends on Mn(2+) as a cofactor.

It catalyses the reaction a 1,2-diacyl-sn-glycero-3-phospho-(1D-myo-inositol-3-phosphate) + ATP = a 1,2-diacyl-sn-glycero-3-phospho-(1D-myo-inositol-3,5-bisphosphate) + ADP + H(+). In terms of biological role, the PI(3,5)P2 regulatory complex regulates both the synthesis and turnover of phosphatidylinositol 3,5-bisphosphate (PtdIns(3,5)P2). Catalyzes the phosphorylation of phosphatidylinositol 3-phosphate on the fifth hydroxyl of the myo-inositol ring, to form phosphatidylinositol 3,5-bisphosphate. The polypeptide is Putative 1-phosphatidylinositol-3-phosphate 5-kinase FAB1C (FAB1C) (Arabidopsis thaliana (Mouse-ear cress)).